Consider the following 670-residue polypeptide: Acetyl-coenzyme A synthetase (670 aa).

Residues 205–208 and Thr326 contribute to the CoA site; that span reads RRGK. ATP is bound by residues 402–404, 426–431, Asp517, Arg532, and Arg543; these read GEP and STWWMT. Positions 554, 556, and 559 each coordinate Mg(2+). Residue Arg601 participates in CoA binding. Lys626 carries the post-translational modification N6-acetyllysine.

The protein belongs to the ATP-dependent AMP-binding enzyme family. It depends on Mg(2+) as a cofactor. Post-translationally, acetylated. Deacetylation by the SIR2-homolog deacetylase activates the enzyme.

The catalysed reaction is acetate + ATP + CoA = acetyl-CoA + AMP + diphosphate. In terms of biological role, catalyzes the conversion of acetate into acetyl-CoA (AcCoA), an essential intermediate at the junction of anabolic and catabolic pathways. AcsA undergoes a two-step reaction. In the first half reaction, AcsA combines acetate with ATP to form acetyl-adenylate (AcAMP) intermediate. In the second half reaction, it can then transfer the acetyl group from AcAMP to the sulfhydryl group of CoA, forming the product AcCoA. The sequence is that of Acetyl-coenzyme A synthetase from Pyrobaculum arsenaticum (strain DSM 13514 / JCM 11321 / PZ6).